Consider the following 90-residue polypeptide: Lectin-1 (90 aa).

Gln1 carries the pyrrolidone carboxylic acid modification. A disulfide bridge links Cys46 with Cys71.

Post-translationally, the N-terminus is blocked. Contains seven disulfide bonds. In terms of processing, proteolytically cleaved. Major mature form may consist of cleaved, disulfide-bonded N-terminal and C-terminal chains.

In terms of biological role, lectin with specificity for complex N-linked glycans and O-linked glycans. Has hemagglutinating activity towards rabbit erythrocytes. This Hypnea musciformis (Red alga) protein is Lectin-1.